The sequence spans 856 residues: Glucans biosynthesis glucosyltransferase H (856 aa).

The next 6 helical transmembrane spans lie at 144–164, 198–218, 517–537, 574–594, 608–628, and 684–704; these read ILLV…KGIM, ILIL…TALM, VFLT…FLVL, LFST…ILIW, TLSM…RMIF, and FLWW…VSVI.

This sequence belongs to the glycosyltransferase 2 family. OpgH subfamily.

The protein resides in the cell inner membrane. The protein operates within glycan metabolism; osmoregulated periplasmic glucan (OPG) biosynthesis. In terms of biological role, involved in the biosynthesis of osmoregulated periplasmic glucans (OPGs). The protein is Glucans biosynthesis glucosyltransferase H of Pseudomonas fluorescens (strain ATCC BAA-477 / NRRL B-23932 / Pf-5).